We begin with the raw amino-acid sequence, 83 residues long: Small ribosomal subunit protein bS16 (83 aa).

Belongs to the bacterial ribosomal protein bS16 family.

The protein is Small ribosomal subunit protein bS16 of Chromobacterium violaceum (strain ATCC 12472 / DSM 30191 / JCM 1249 / CCUG 213 / NBRC 12614 / NCIMB 9131 / NCTC 9757 / MK).